The chain runs to 317 residues: Acetyl-coenzyme A carboxylase carboxyl transferase subunit alpha (317 aa).

Residues 40–293 (LEKRSADALK…GDIIAASLRS (254 aa)) form the CoA carboxyltransferase C-terminal domain.

The protein belongs to the AccA family. In terms of assembly, acetyl-CoA carboxylase is a heterohexamer composed of biotin carboxyl carrier protein (AccB), biotin carboxylase (AccC) and two subunits each of ACCase subunit alpha (AccA) and ACCase subunit beta (AccD).

Its subcellular location is the cytoplasm. It catalyses the reaction N(6)-carboxybiotinyl-L-lysyl-[protein] + acetyl-CoA = N(6)-biotinyl-L-lysyl-[protein] + malonyl-CoA. It functions in the pathway lipid metabolism; malonyl-CoA biosynthesis; malonyl-CoA from acetyl-CoA: step 1/1. Functionally, component of the acetyl coenzyme A carboxylase (ACC) complex. First, biotin carboxylase catalyzes the carboxylation of biotin on its carrier protein (BCCP) and then the CO(2) group is transferred by the carboxyltransferase to acetyl-CoA to form malonyl-CoA. In Brucella abortus (strain S19), this protein is Acetyl-coenzyme A carboxylase carboxyl transferase subunit alpha.